The chain runs to 307 residues: Plasmodesmata-located protein 2 (307 aa).

The N-terminal stretch at 1 to 23 (MGLSISFLSIIMMMCLLFPDLNV) is a signal peptide. At 24 to 275 (VVKSATTEYT…STSTGATGKT (252 aa)) the chain is on the extracellular side. Gnk2-homologous domains lie at 33–136 (TTLI…VSGF) and 141–240 (GMEM…YYPN). Cystine bridges form between C40-C114, C90-C99, C102-C127, C149-C218, C194-C203, and C206-C231. The span at 246-268 (SSSSSSSSSSSSSGSSNSDPSTS) shows a compositional bias: low complexity. Residues 246 to 270 (SSSSSSSSSSSSSGSSNSDPSTSTG) are disordered. Residues 276-296 (VAIIVGGAAGVGFLVICLLFA) form a helical membrane-spanning segment. The necessary and sufficient for plasmodesmal targeting stretch occupies residues 276 to 296 (VAIIVGGAAGVGFLVICLLFA). At 297 to 307 (KNLMRKKHDDY) the chain is on the cytoplasmic side.

It belongs to the cysteine-rich repeat secretory protein family. Plasmodesmata-located proteins (PDLD) subfamily. As to quaternary structure, (Microbial infection) Interacts with Grapevine fanleaf virus (GFLV) 2B-MP. As to expression, highly expressed in inflorescence shoot apex. Uniformly expressed within the inflorescence meristem with the exception of a boundary zone between floral primordia and the meristem where the expression is weaker (at protein level).

The protein resides in the cell membrane. Its subcellular location is the cell junction. It localises to the plasmodesma. Functionally, modulates cell-to-cell trafficking. In Arabidopsis thaliana (Mouse-ear cress), this protein is Plasmodesmata-located protein 2.